A 499-amino-acid chain; its full sequence is MNIKASEIAAVLKEEIKNYKADFTPNEVGVVVEVGDGIARIIGLPHVMANEMILFESGAVGLAFNLEEETIGAIVLGDYYGIKEGSKVSRLKRILEVPVGDALLGRVVNPLGVPIDGHGEITTDKRRVIEFPAPGIADRQAVKQPLQTGIKAIDSMTPIGRGQRQLIIGDRGTGKTSIALDAIINQKGTGVICIYVAIGQKASTVAGVVDTLRQHGALEYTIVVAATAADSAPLQYIAPYGGCAMAEYFMYEQKKDTLIIYDDLTKQANAYRQISLLLRRPPGREAFPGDVFYLHSRLLERAAKLSDELGGGSLTALPIIETQDNEVSAYIPTNVISITDGQIYLLTSLFMSGVRPAIDVGISVSRVGGNAQTKAMKKVAGTLRLDLASYRSLEAFSQLGIGLDKATLAQLDRGAKMVELLKQKQYSPIPFEEQVVVIFAATKGFLDNIEVDRVHEFEWRLLQYMRADKQNILDDIREKKDIEDMDGLYKIIEEFKSKF.

Residue glycine 169–threonine 176 participates in ATP binding.

The protein belongs to the ATPase alpha/beta chains family. F-type ATPases have 2 components, CF(1) - the catalytic core - and CF(0) - the membrane proton channel. CF(1) has five subunits: alpha(3), beta(3), gamma(1), delta(1), epsilon(1). CF(0) has three main subunits: a(1), b(2) and c(9-12). The alpha and beta chains form an alternating ring which encloses part of the gamma chain. CF(1) is attached to CF(0) by a central stalk formed by the gamma and epsilon chains, while a peripheral stalk is formed by the delta and b chains.

It localises to the cell inner membrane. It carries out the reaction ATP + H2O + 4 H(+)(in) = ADP + phosphate + 5 H(+)(out). Functionally, produces ATP from ADP in the presence of a proton gradient across the membrane. The alpha chain is a regulatory subunit. This Brachyspira hyodysenteriae (strain ATCC 49526 / WA1) protein is ATP synthase subunit alpha.